The primary structure comprises 392 residues: MAFLMKKKKFKFQTTFTLEELTAVPFVNGVLFCKVRLLDGGDFVSLSSREEVQENCVRWRKRFTFVCKMSANPATGLLDPCIFRVSVRKELKGGKAYSKLGFTDLNLAEFAGSGSTVRCCLLEGYDTKNTRQDNSILKVTIGMFLLSGDPCFKTPPSTAKSISIPGQDSSLQLTCKGGGTSSGGSSSTNSLTGSRPPKTRPTILGSGLPEEPDQSLSSPEEVFHSGHSRNSSYASQQSKLSGYSTEHSRSSSLSDLTHRRNTSTSSSASGGLSMAVEGPEGMEREHRPSEKPPRPPEKPPRPPRPLHLSDRSFRRKKDSVESHPTWVDDTRIDADDIVEKIMQSQDFTDGSNTEDSNLRLFVSRDGSTTLSGIQLGNRVSSGVYEPVVIESH.

The C2 NT-type domain maps to 2–145 (AFLMKKKKFK…ILKVTIGMFL (144 aa)). The required for interaction with TNFRSF11A/RANK stretch occupies residues 129-138 (NTRQDNSILK). Positions 173–324 (LTCKGGGTSS…RKKDSVESHP (152 aa)) are disordered. A compositionally biased stretch (low complexity) spans 183–194 (GGSSSTNSLTGS). The segment covering 228 to 255 (SRNSSYASQQSKLSGYSTEHSRSSSLSD) has biased composition (polar residues). The segment covering 262-273 (TSTSSSASGGLS) has biased composition (low complexity). Composition is skewed to basic and acidic residues over residues 281–300 (GMER…EKPP) and 307–324 (HLSD…ESHP).

Belongs to the EEIG family. As to quaternary structure, part of a complex composed of EEIG1, TNFRSF11A/RANK, PLCG2, GAB2, TEC and BTK; complex formation increases in the presence of TNFSF11/RANKL. Interacts with PRDM1/BLIMP1; following TNFSF11/RANKL stimulation in bone marrow-derived macrophages, the interaction promotes the binding of PRDM1/BLIMP1 to the gene promoter of IRF8. Interacts (via N-terminus) with TNFRSF11A/RANK (via cytoplasmic domain); when in the presence of TNFSF11/RANKL. As to expression, expressed during TNFSF11/RANKL-induced differentiation of bone marrow-derived macrophages to osteoclasts.

It localises to the nucleus. Its subcellular location is the cytoplasm. It is found in the membrane raft. In terms of biological role, key component of TNFSF11/RANKL- and TNF-induced osteoclastogenesis pathways, thereby mediates bone resorption in pathological bone loss conditions. Required for TNFSF11/RANKL-induced osteoclastogenesis via its interaction with TNFRSF11A/RANK, thereby facilitates the downsteam transcription of NFATC1 and activation of PLCG2. Facilitates recruitment of the transcriptional repressor PRDM1/BLIMP1 to the promoter of the anti-osteoclastogenesis gene IRF8, thereby resulting in transcription of osteoclast differentiation factors. May play a role in estrogen action. This Mus musculus (Mouse) protein is Early estrogen-induced gene 1 protein (Eeig1).